The primary structure comprises 94 residues: Integration host factor subunit beta (94 aa).

The protein belongs to the bacterial histone-like protein family. As to quaternary structure, heterodimer of an alpha and a beta chain.

In terms of biological role, this protein is one of the two subunits of integration host factor, a specific DNA-binding protein that functions in genetic recombination as well as in transcriptional and translational control. The polypeptide is Integration host factor subunit beta (Brucella abortus (strain S19)).